Here is a 742-residue protein sequence, read N- to C-terminus: Two-component response regulator-like PRR37 (742 aa).

A Response regulatory domain is found at 63-181 (KVLLVDSDDS…ELKNLWQHVW (119 aa)). Over residues 186 to 195 (SSSGSGSESG) the composition is skewed to low complexity. 6 disordered regions span residues 186 to 249 (SSSG…SWTK), 290 to 346 (PCTS…PLQN), 375 to 402 (DAQQ…NRDN), 478 to 570 (MKSN…VQSN), 590 to 671 (NGGS…GNDM), and 697 to 742 (NFGK…AADR). A compositionally biased stretch (polar residues) spans 236-248 (DNGSGTQAQSSWT). The segment covering 299–313 (KQKETNDDFKGKDLE) has biased composition (basic and acidic residues). Over residues 318–330 (RNLNTAYQSSPNE) the composition is skewed to polar residues. Residues 331–341 (RSIKPTDRRNE) are compositionally biased toward basic and acidic residues. The span at 380–390 (ARATNAPNCSS) shows a compositional bias: polar residues. A compositionally biased stretch (low complexity) spans 490-502 (GSNGSSNNNDMGS). The segment covering 503–512 (TTKNVVTKPS) has biased composition (polar residues). Positions 618–634 (NGSNSGSNNGSNGQNGS) are enriched in low complexity. Gly residues predominate over residues 656 to 667 (GPGGGNGSGSGS). The 43-residue stretch at 682–724 (RVAAVIKFRQKRKERNFGKKVRYQSRKRLAEQRPRVRGQFVRQ) folds into the CCT domain. Over residues 697 to 708 (NFGKKVRYQSRK) the composition is skewed to basic residues. The span at 719 to 731 (GQFVRQAVQDQQQ) shows a compositional bias: low complexity.

The protein belongs to the ARR-like family.

The protein resides in the nucleus. Functionally, controls photoperiodic flowering response. Seems to be one of the component of the circadian clock. Expression of several members of the ARR-like family is controlled by circadian rhythm. The particular coordinated sequential expression of PRR73, PRR37, PRR95, PRR59 and PPR1 result to circadian waves that may be at the basis of the endogenous circadian clock. This Oryza sativa subsp. indica (Rice) protein is Two-component response regulator-like PRR37 (PRR37).